Here is a 223-residue protein sequence, read N- to C-terminus: Germin-like protein 1-3 (223 aa).

Positions 1–22 are cleaved as a signal peptide; sequence MAKLILATFAVVFMALAATSLA. A disulfide bond links cysteine 32 and cysteine 50. Asparagine 55 is a glycosylation site (N-linked (GlcNAc...) asparagine). Residues 64–212 enclose the Cupin type-1 domain; it reads DGLMKAGNTG…AFQVDGGMVE (149 aa). Histidine 112, histidine 114, glutamate 119, and histidine 158 together coordinate Mn(2+).

This sequence belongs to the germin family. In terms of assembly, oligomer (believed to be a pentamer but probably hexamer).

It is found in the secreted. The protein resides in the extracellular space. The protein localises to the apoplast. May play a role in plant defense. Probably has no oxalate oxidase activity even if the active site is conserved. The sequence is that of Germin-like protein 1-3 (GER8) from Oryza sativa subsp. japonica (Rice).